The sequence spans 564 residues: Potassium-transporting ATPase potassium-binding subunit (564 aa).

A run of 10 helical transmembrane segments spans residues 4 to 24 (YDYW…PFLG), 67 to 87 (MLAL…ILLF), 135 to 155 (AGLT…LVAL), 179 to 199 (LYGL…QGVP), 254 to 274 (WANL…VFTF), 286 to 306 (AILG…LWAE), 382 to 402 (AGMY…GLMI), 420 to 440 (LLVV…AIAA), 487 to 507 (LMLG…VLAL), and 528 to 548 (GPLF…LTFL).

The protein belongs to the KdpA family. As to quaternary structure, the system is composed of three essential subunits: KdpA, KdpB and KdpC.

The protein localises to the cell inner membrane. Part of the high-affinity ATP-driven potassium transport (or Kdp) system, which catalyzes the hydrolysis of ATP coupled with the electrogenic transport of potassium into the cytoplasm. This subunit binds the periplasmic potassium ions and delivers the ions to the membrane domain of KdpB through an intramembrane tunnel. The sequence is that of Potassium-transporting ATPase potassium-binding subunit from Pseudomonas fluorescens (strain SBW25).